A 579-amino-acid polypeptide reads, in one-letter code: Effector protein HopAB3 (579 aa).

3 disordered regions span residues 1-140, 214-294, and 384-408; these read MAGI…TGAV, VRQQ…NQVP, and PARA…PDSA. The host recognition; Pto interaction stretch occupies residues 1–336; it reads MAGINGAGPS…LRAALERHIL (336 aa). 5 stretches are compositionally biased toward low complexity: residues 23-39, 89-101, 219-248, 266-281, and 384-402; these read ASGG…SSNS, RPQE…APQA, ASAP…ESSS, NQRR…ASQR, and PARA…ATVS. Residues 337–579 form an E3 ubiquitin-protein ligase region; that stretch reads HRRPIPMDIA…IAKYAFRIVP (243 aa).

Belongs to the HopAB family. In terms of assembly, interacts physically with plant cell Pto. Post-translationally, auto-ubiquitinated.

It is found in the secreted. Functionally, effector protein involved in gene-for-gene resistance in tomato plants. It is recognized by the host Pto resistance protein and elicits Pto and Prf-dependent hypersensitive response (HR) and programmed cell death (PCD), resulting in host immunity. In susceptible plants, acts as a virulence factor by suppressing PCD and HR-based plant immunity. This function requires its E3 ubiquitin ligase activity probably by recruiting E2 enzymes and transferring ubiquitin molecules to cellular proteins involved in regulation of PCD and targeting them for degradation. Enhances the development of disease symptoms and bacterial growth. This chain is Effector protein HopAB3 (hopAB3), found in Pseudomonas syringae pv. tomato.